The primary structure comprises 1178 residues: Pyruvate carboxylase, mitochondrial (1178 aa).

A mitochondrion-targeting transit peptide spans 1–20 (MLKFQTVRGGLRLLGVRRSS). 2 positions are modified to N6-acetyllysine: Lys-35 and Lys-39. In terms of domain architecture, Biotin carboxylation spans 36-486 (PIKKVMVANR…DTQFIDENPE (451 aa)). Position 79 is an N6-acetyllysine; alternate (Lys-79). Lys-79 is modified (N6-succinyllysine; alternate). Lys-148 and Lys-152 each carry N6-acetyllysine. Positions 152 and 236 each coordinate ATP. Residues 156–353 (RAIAIAAGVP…LVHAQIHVSE (198 aa)) enclose the ATP-grasp domain. Lys-241 bears the N6-acetyllysine mark. His-271 lines the ATP pocket. 3 positions are modified to N6-acetyllysine: Lys-297, Lys-316, and Lys-319. Arg-328 is an active-site residue. The residue at position 434 (Lys-434) is an N6-acetyllysine. Position 442 is an N6-succinyllysine (Lys-442). One can recognise a Pyruvate carboxyltransferase domain in the interval 563–832 (LLLMDTTFRD…DTEVPLERVF (270 aa)). A substrate-binding site is contributed by 571–575 (RDAHQ). Mn(2+) is bound at residue Asp-572. N6-acetyllysine is present on Lys-589. Position 644 (Arg-644) interacts with substrate. 2 positions are modified to N6-acetyllysine: Lys-661 and Lys-717. Lys-741 provides a ligand contact to Mn(2+). Position 741 is an N6-carboxylysine (Lys-741). An N6-acetyllysine modification is found at Lys-748. Mn(2+)-binding residues include His-771 and His-773. The residue at position 892 (Lys-892) is an N6-acetyllysine. Residue Thr-908 coordinates substrate. Lys-969 carries the N6-acetyllysine modification. Position 988 is an N6-acetyllysine; alternate (Lys-988). N6-succinyllysine; alternate is present on Lys-988. Lys-992 bears the N6-acetyllysine mark. Phosphothreonine is present on Thr-1003. N6-acetyllysine occurs at positions 1061, 1090, and 1124. Residues 1109–1178 (KGQIGAPMPG…EGDDLILEIE (70 aa)) enclose the Biotinyl-binding domain. N6-biotinyllysine is present on Lys-1144.

Homotetramer. Interacts (via the biotin carboxylation domain) with SIRT4. It depends on biotin as a cofactor. Mn(2+) is required as a cofactor. Post-translationally, acetylation of Lys-748 might play a role in catalytic activity regulation.

The protein localises to the mitochondrion matrix. It carries out the reaction hydrogencarbonate + pyruvate + ATP = oxaloacetate + ADP + phosphate + H(+). The protein operates within carbohydrate biosynthesis; gluconeogenesis. Pyruvate carboxylase catalyzes a 2-step reaction, involving the ATP-dependent carboxylation of the covalently attached biotin in the first step and the transfer of the carboxyl group to pyruvate in the second. Catalyzes in a tissue specific manner, the initial reactions of glucose (liver, kidney) and lipid (adipose tissue, liver, brain) synthesis from pyruvate. The protein is Pyruvate carboxylase, mitochondrial (Pc) of Rattus norvegicus (Rat).